Here is a 406-residue protein sequence, read N- to C-terminus: 3-phosphoshikimate 1-carboxyvinyltransferase (406 aa).

3-phosphoshikimate is bound by residues K20, S21, and R25. Residue K20 participates in phosphoenolpyruvate binding. Positions 84 and 112 each coordinate phosphoenolpyruvate. 6 residues coordinate 3-phosphoshikimate: S155, S156, Q157, D295, Q317, and K321. Q157 serves as a coordination point for phosphoenolpyruvate. Catalysis depends on D295, which acts as the Proton acceptor. R325, R366, and K392 together coordinate phosphoenolpyruvate.

The protein belongs to the EPSP synthase family. Monomer.

It localises to the cytoplasm. The enzyme catalyses 3-phosphoshikimate + phosphoenolpyruvate = 5-O-(1-carboxyvinyl)-3-phosphoshikimate + phosphate. Its pathway is metabolic intermediate biosynthesis; chorismate biosynthesis. In terms of biological role, catalyzes the transfer of the enolpyruvyl moiety of phosphoenolpyruvate (PEP) to the 5-hydroxyl of shikimate-3-phosphate (S3P) to produce enolpyruvyl shikimate-3-phosphate and inorganic phosphate. The chain is 3-phosphoshikimate 1-carboxyvinyltransferase from Pyrococcus furiosus (strain ATCC 43587 / DSM 3638 / JCM 8422 / Vc1).